A 437-amino-acid chain; its full sequence is Vasoactive intestinal polypeptide receptor 2 (437 aa).

The N-terminal stretch at 1 to 22 is a signal peptide; the sequence is MRASVVLTCYCWLLVRVSSIHP. The Extracellular segment spans residues 23–123; sequence ECRFHLEIQE…EDESKITFYI (101 aa). 3 disulfide bridges follow: Cys37–Cys60, Cys51–Cys92, and Cys74–Cys108. Residues Asn57, Asn87, and Asn91 are each glycosylated (N-linked (GlcNAc...) asparagine). The helical transmembrane segment at 124–149 threads the bilayer; the sequence is LVKAIYTLGYSVSLMSLTTGSIIICL. The Cytoplasmic segment spans residues 150 to 157; the sequence is FRKLHCTR. Residues 158–179 form a helical membrane-spanning segment; sequence NYIHLNLFLSFMLRAISVLVKD. Topologically, residues 180 to 202 are extracellular; sequence SVLYSSSGTLRCHDQPGSWVGCK. An intrachain disulfide couples Cys201 to Cys270. The helical transmembrane segment at 203-227 threads the bilayer; it reads LSLVFFQYCIMANFYWLLVEGLYLH. Residues 228–238 lie on the Cytoplasmic side of the membrane; that stretch reads TLLVAILPPSR. A helical transmembrane segment spans residues 239 to 260; it reads CFLAYLLIGWGIPSVCIGAWIA. The Extracellular segment spans residues 261–279; it reads TRLSLEDTGCWDTNDHSIP. Residues 280 to 303 traverse the membrane as a helical segment; sequence WWVIRMPILISIVVNFALFISIVR. The Cytoplasmic portion of the chain corresponds to 304–324; the sequence is ILLQKLTSPDVGGNDQSQYKR. A helical membrane pass occupies residues 325 to 345; that stretch reads LAKSTLLLIPLFGVHYMVFAA. Residues 346-353 are Extracellular-facing; that stretch reads FPIGISST. The chain crosses the membrane as a helical span at residues 354–377; it reads YQILFELCVGSFQGLVVAVLYCFL. Topologically, residues 378-437 are cytoplasmic; the sequence is NSEVQCELKRRWRGLCLTQPGSRDYRLHSWSMSRNGSESALQIHRGSRTQSFLQSETSVI.

Belongs to the G-protein coupled receptor 2 family. In terms of assembly, interacts with ADCYAP1/PACAP (via N-terminal extracellular domain); activated by PACAP27 and CAPAC38 neuropeptides. Interacts with VIP; the interaction results in VIPR1 activation. Mainly in the thalamus, hippocampus and in the suprachiasmatic nucleus.

It localises to the cell membrane. In terms of biological role, g protein-coupled receptor activated by the neuropeptides vasoactive intestinal peptide (VIP) and pituitary adenylate cyclase-activating polypeptide (ADCYAP1/PACAP). Binds VIP and both PACAP27 and PACAP38 bioactive peptides with the order of ligand affinity of VIP = PACAP38 &gt; PACAP27. Ligand binding causes a conformation change that triggers signaling via guanine nucleotide-binding proteins (G proteins) and modulates the activity of downstream effectors. Activates cAMP-dependent pathway. May be coupled to phospholipase C. This chain is Vasoactive intestinal polypeptide receptor 2, found in Rattus norvegicus (Rat).